Reading from the N-terminus, the 551-residue chain is Malate synthase, glyoxysomal (551 aa).

R174 (proton acceptor) is an active-site residue. The active-site Proton donor is D458.

The protein belongs to the malate synthase family.

Its subcellular location is the glyoxysome. The enzyme catalyses glyoxylate + acetyl-CoA + H2O = (S)-malate + CoA + H(+). The protein operates within carbohydrate metabolism; glyoxylate cycle; (S)-malate from isocitrate: step 2/2. This chain is Malate synthase, glyoxysomal (PMS1), found in Candida tropicalis (Yeast).